The chain runs to 354 residues: AT-hook motif nuclear-localized protein 11 (354 aa).

Disordered stretches follow at residues 1-158 and 290-354; these read MDRR…MMPS and KREE…LMRG. Composition is skewed to low complexity over residues 46–55 and 75–96; these read NSISPFGSNP and VDSS…PPSG. The short motif at 101–109 is the Bipartite nuclear localization signal element; that stretch reads KRKRGRPRK. The segment at residues 101-113 is a DNA-binding region (a.T hook 1); the sequence is KRKRGRPRKYGQD. Residues 122–133 show a composition bias toward low complexity; it reads SPSISNVSPNSN. A DNA-binding region (a.T hook 2) is located at residues 134–146; that stretch reads KRGRGRPPGSGKK. The 144-residue stretch at 159 to 302 folds into the PPC domain; it reads STGMSFTPHV…ETSEDVQDTD (144 aa). Positions 294-303 are enriched in acidic residues; it reads TSEDVQDTDA. Polar residues predominate over residues 304 to 327; the sequence is LENNNDNTAATSPPVPQQSQNIVQ. Positions 340–354 are enriched in basic and acidic residues; the sequence is MDMHHPHMDIDLMRG.

Its subcellular location is the nucleus. Functionally, transcription factor that specifically binds AT-rich DNA sequences related to the nuclear matrix attachment regions (MARs). This is AT-hook motif nuclear-localized protein 11 from Arabidopsis thaliana (Mouse-ear cress).